A 309-amino-acid chain; its full sequence is Malate dehydrogenase (309 aa).

Residues 10–15 (GAGNVG) and aspartate 34 each bind NAD(+). Residues arginine 83 and arginine 89 each coordinate substrate. NAD(+) is bound by residues asparagine 96 and 119–121 (VTN). Substrate is bound by residues asparagine 121 and arginine 152. Residue histidine 176 is the Proton acceptor of the active site.

It belongs to the LDH/MDH superfamily. MDH type 3 family.

The catalysed reaction is (S)-malate + NAD(+) = oxaloacetate + NADH + H(+). Functionally, catalyzes the reversible oxidation of malate to oxaloacetate. In Desulforudis audaxviator (strain MP104C), this protein is Malate dehydrogenase.